The chain runs to 124 residues: MARIAGVDIPKNKRGVIALTYIFGVGRSRAIEVLEKAQVSQDKKVQDWNDDEIGGIREAVSFYKIEGELRSEVSLNIKRLMDIGCYRGIRHRSGLPLRGQRTKNNSRTRKGKRKTVANKKKATK.

The segment at 94 to 124 (GLPLRGQRTKNNSRTRKGKRKTVANKKKATK) is disordered. Residues 100–124 (QRTKNNSRTRKGKRKTVANKKKATK) are compositionally biased toward basic residues.

The protein belongs to the universal ribosomal protein uS13 family. Part of the 30S ribosomal subunit. Forms a loose heterodimer with protein S19. Forms two bridges to the 50S subunit in the 70S ribosome.

Its function is as follows. Located at the top of the head of the 30S subunit, it contacts several helices of the 16S rRNA. In the 70S ribosome it contacts the 23S rRNA (bridge B1a) and protein L5 of the 50S subunit (bridge B1b), connecting the 2 subunits; these bridges are implicated in subunit movement. Contacts the tRNAs in the A and P-sites. In Flavobacterium psychrophilum (strain ATCC 49511 / DSM 21280 / CIP 103535 / JIP02/86), this protein is Small ribosomal subunit protein uS13.